The chain runs to 247 residues: Chymase (247 aa).

An N-terminal signal peptide occupies residues 1 to 19 (MNLHALCLLLLLLGSSTKA). Residues 20-21 (GE) constitute a propeptide, activation peptide. Residues 22 to 245 (IIGGTECIPH…YRPWINKILR (224 aa)) enclose the Peptidase S1 domain. Residues C51 and C67 are joined by a disulfide bond. H66 functions as the Charge relay system in the catalytic mechanism. A glycan (N-linked (GlcNAc...) asparagine) is linked at N80. D110 serves as the catalytic Charge relay system. Disulfide bonds link C144-C209 and C175-C188. S203 functions as the Charge relay system in the catalytic mechanism.

This sequence belongs to the peptidase S1 family. Granzyme subfamily. Mast cells.

It is found in the secreted. The protein resides in the cytoplasmic granule. The enzyme catalyses Preferential cleavage: Phe-|-Xaa &gt; Tyr-|-Xaa &gt; Trp-|-Xaa &gt; Leu-|-Xaa.. Functionally, major secreted protease of mast cells with suspected roles in vasoactive peptide generation, extracellular matrix degradation, and regulation of gland secretion. The chain is Chymase (Cma1) from Rattus norvegicus (Rat).